The following is a 367-amino-acid chain: Probable butyrate kinase (367 aa).

The protein belongs to the acetokinase family.

The protein localises to the cytoplasm. It catalyses the reaction butanoate + ATP = butanoyl phosphate + ADP. This Bacillus cereus (strain B4264) protein is Probable butyrate kinase.